Reading from the N-terminus, the 597-residue chain is Integrator complex subunit 11 (597 aa).

Zn(2+)-binding residues include H68, H70, D72, H73, H157, and D178. The HXHXDH motif signature appears at 68–73; that stretch reads HFHLDH. E203 is an active-site residue. H414 lines the Zn(2+) pocket. K462 serves as a coordination point for 1D-myo-inositol hexakisphosphate.

It belongs to the metallo-beta-lactamase superfamily. RNA-metabolizing metallo-beta-lactamase-like family. INTS11 subfamily. Belongs to the multiprotein complex Integrator, at least composed of IntS1, IntS2, IntS3, IntS4, omd/IntS5, IntS6, defl/IntS7, IntS8, IntS9, IntS10, IntS11, IntS12, asun/IntS13, IntS14 and IntS15. The core complex associates with protein phosphatase 2A subunits mts/PP2A and Pp2A-29B, to form the Integrator-PP2A (INTAC) complex. IntS11 is part of the RNA endonuclease subcomplex, composed of IntS4, IntS9, IntS11 and inositol hexakisphosphate (InsP6). Interacts with Brat1; interaction is required for the assembly of the RNA endonuclease subcomplex and inhibits the endonuclease activity of IntS11 before formation of mature integrator complex. Zn(2+) serves as cofactor. Expressed in neurons and glia of the larval and adult brain.

Its subcellular location is the nucleus. It localises to the cytoplasm. It is found in the cytosol. Its activity is regulated as follows. The RNA endonuclease activity is inhibited by Brat1 that forms hyrogen bond and hydrophobic interactions with the active site. In terms of biological role, RNA endonuclease component of the integrator complex, a multiprotein complex that terminates RNA polymerase II (Pol II) transcription in the promoter-proximal region of genes. The integrator complex provides a quality checkpoint during transcription elongation by driving premature transcription termination of transcripts that are unfavorably configured for transcriptional elongation: the complex terminates transcription by (1) catalyzing dephosphorylation of the C-terminal domain (CTD) of Pol II subunit Polr2A/Rbp1 and Spt5, and (2) degrading the exiting nascent RNA transcript via endonuclease activity. The integrator complex is also involved in the 3'-end processing of the U7 snRNA, and also the spliceosomal snRNAs U1, U2, U4 and U5. Within the integrator complex, IntS11 constitutes the RNA endonuclease subunit that degrades exiting nascent RNA transcripts. The chain is Integrator complex subunit 11 from Drosophila melanogaster (Fruit fly).